The primary structure comprises 419 residues: Transcription regulator lscL (419 aa).

Positions 12-35 (RIRKVKCDEKKPCCQKCIDTGRTC) form a DNA-binding region, zn(2)-C6 fungal-type.

It localises to the nucleus. In terms of biological role, transcription factor that may coregulate the expression of the gene cluster that mediates the biosynthesis of the lipopeptide antibiotics leucinostatins that show extensive biological activities, including antimalarial, antiviral, antibacterial, antifungal, and antitumor activities, as well as phytotoxic. This chain is Transcription regulator lscL, found in Purpureocillium lilacinum (Paecilomyces lilacinus).